The primary structure comprises 140 residues: Mediator of RNA polymerase II transcription subunit 21 (140 aa).

A coiled-coil region spans residues glutamate 52–glutamine 130.

It belongs to the Mediator complex subunit 21 family. Component of the Mediator complex.

The protein resides in the nucleus. In terms of biological role, component of the Mediator complex, a coactivator involved in the regulated transcription of nearly all RNA polymerase II-dependent genes. Mediator functions as a bridge to convey information from gene-specific regulatory proteins to the basal RNA polymerase II transcription machinery. Mediator is recruited to promoters by direct interactions with regulatory proteins and serves as a scaffold for the assembly of a functional preinitiation complex with RNA polymerase II and the general transcription factors. The chain is Mediator of RNA polymerase II transcription subunit 21 (SRB7) from Yarrowia lipolytica (strain CLIB 122 / E 150) (Yeast).